The following is a 551-amino-acid chain: HTH-type transcriptional regulator SgrR (551 aa).

One can recognise an HTH marR-type domain in the interval 1–116 (MPSARLQQQF…LVSHLGRSFR (116 aa)). A DNA-binding region (H-T-H motif) is located at residues 26–49 (LNELAALLSCSRRHMRTLLNTMQD). The segment at 163–492 (ELEADIAHHW…IDWQADAARW (330 aa)) is solute-binding.

Functionally, activates the small RNA gene sgrS under glucose-phosphate stress conditions as well as yfdZ. Represses its own transcription under both stress and non-stress conditions. Might act as a sensor of the intracellular accumulation of phosphoglucose by binding these molecules in its C-terminal solute-binding domain. The sequence is that of HTH-type transcriptional regulator SgrR from Escherichia coli O1:K1 / APEC.